A 405-amino-acid chain; its full sequence is Coiled-coil domain-containing protein 91 (405 aa).

Residues 1-16 (MDDDDFGGFEAAETFD) form a GGA1-binding motif region. Residues 1-27 (MDDDDFGGFEAAETFDGGNGETQTTSP) form a disordered region. Phosphoserine is present on residues S43 and S46. Residues 126 to 376 (GANVSNIQLR…QKRLDQVIRQ (251 aa)) are a coiled coil. A homodimerization region spans residues 210 to 377 (LSIIVDEYKH…KRLDQVIRQR (168 aa)).

As to quaternary structure, homodimer. Interacts with GGA1, GGA2 and AP1G1.

The protein resides in the membrane. The protein localises to the golgi apparatus. It localises to the trans-Golgi network membrane. It is found in the trans-Golgi network. Its function is as follows. Involved in the regulation of membrane traffic through the trans-Golgi network (TGN). Functions in close cooperation with the GGAs in the sorting of hydrolases to lysosomes. This Pongo abelii (Sumatran orangutan) protein is Coiled-coil domain-containing protein 91 (CCDC91).